The following is a 1196-amino-acid chain: Protein BRASSINOSTEROID INSENSITIVE 1 (1196 aa).

The first 23 residues, 1 to 23 (MKTFSSFFLSVTTLFFFSFFSLS), serve as a signal peptide directing secretion. The Cys pair 1 motif lies at 62–69 (CTFDGVTC). 21 LRR repeats span residues 71–98 (DDKV…LLSL), 99–121 (TGLE…FKCS), 122–146 (ASLT…SLGS), 148–169 (SGLK…VSGG), 172–197 (LNSL…VLSD), 199–221 (CGEL…VSRC), 222–244 (VNLE…LGDC), 245–268 (SALQ…ISTC), 269–290 (TELK…PLPL), 291–314 (KSLQ…LSGA), 316–338 (DTLT…FFGS), 339–363 (CSLL…TLLK), 364–388 (MRGL…LTNL), 390–413 (ASLL…LCQN), 415–439 (KNTL…LSNC), 441–463 (ELVS…LGSL), 464–487 (SKLR…LMYV), 488–511 (KTLE…LSNC), 513–535 (NLNW…IGRL), 536–559 (ENLA…LGDC), and 561–583 (SLIW…MFKQ). N-linked (GlcNAc...) asparagine glycosylation is present at Asn-112. An N-linked (GlcNAc...) asparagine glycan is attached at Asn-154. An N-linked (GlcNAc...) asparagine glycan is attached at Asn-233. Asn-275 is a glycosylation site (N-linked (GlcNAc...) asparagine). 4 N-linked (GlcNAc...) asparagine glycosylation sites follow: Asn-351, Asn-387, Asn-401, and Asn-438. Asn-510 carries an N-linked (GlcNAc...) asparagine glycan. 2 N-linked (GlcNAc...) asparagine glycosylation sites follow: Asn-545 and Asn-573. Tyr-597 lines the brassinolide pocket. Asn-636 is a glycosylation site (N-linked (GlcNAc...) asparagine). An SERK1 binding region spans residues 640–642 (RVY). Positions 642 and 647 each coordinate brassinolide. Asn-653 carries N-linked (GlcNAc...) asparagine glycosylation. 4 LRR repeats span residues 653-677 (NGSM…IGSM), 678-701 (PYLF…VGDL), 702-725 (RGLN…MSAL), and 727-750 (MLTE…QFET). Residue Asn-705 coordinates brassinolide. The tract at residues 726–729 (TMLT) is SERK1 binding. Asn-737 carries an N-linked (GlcNAc...) asparagine glycan. Residues 746–750 (GQFET) are SERK1 binding. Residues 763–770 (CGYPLPRC) carry the Cys pair 2 motif. Residues 793 to 813 (AGSVAMGLLFSFVCIFGLILV) traverse the membrane as a helical segment. Residue Tyr-831 is modified to Phosphotyrosine. A Phosphoserine modification is found at Ser-838. Phosphothreonine is present on residues Thr-842, Thr-846, and Thr-851. Position 858 is a phosphoserine (Ser-858). Phosphothreonine is present on residues Thr-872 and Thr-880. The Protein kinase domain occupies 883–1158 (FHNDSLIGSG…VQVMAMFKEI (276 aa)). Phosphoserine occurs at positions 887 and 891. ATP is bound by residues 889-897 (IGSGGFGDV) and Lys-911. Tyr-956 carries the phosphotyrosine modification. Residues 957–959 (EFM) and 963–966 (SLED) each bind ATP. A Phosphoserine modification is found at Ser-981. Thr-982 is modified (phosphothreonine). Residue Asp-1009 is the Proton acceptor of the active site. ATP-binding positions include 1009–1014 (DMKSSN) and Asp-1027. Ser-1035 is modified (phosphoserine). Residue Thr-1039 is modified to Phosphothreonine. A phosphoserine mark is found at Ser-1042 and Ser-1044. Phosphothreonine is present on residues Thr-1045 and Thr-1049. Tyr-1052 is modified (phosphotyrosine). The residue at position 1060 (Ser-1060) is a Phosphoserine. Tyr-1072 bears the Phosphotyrosine mark. Residues Ser-1166 and Ser-1168 each carry the phosphoserine modification. The residue at position 1169 (Thr-1169) is a Phosphothreonine. 2 positions are modified to phosphoserine: Ser-1172 and Ser-1179. Thr-1180 carries the phosphothreonine modification. Position 1187 is a phosphoserine (Ser-1187).

The protein belongs to the protein kinase superfamily. Ser/Thr protein kinase family. As to quaternary structure, monomer or homodimer in the plasma membrane. Heterodimer with BAK1 in the endosomes. Interacts with SERK1 and TTL in a kinase-dependent manner. Bind to SERK1 in a brassinolide-dependent manner. Component of the SERK1 signaling complex, composed of KAPP, CDC48A, GRF6 or GRF7, SERK1, SERK2, SERK3/BAK1 and BRI1. Interacts with CDG1. No interactions with PSKR1 or CNGC17. Interacts with BIK1. Interacts with B'ALPHA, B'BETA, B'GAMMA and B'ETA. Interacts with BSK1 and BSK3. Interacts with BSK5, BSK6 and BSK11. Post-translationally, autophosphorylated on Tyr-831, Tyr-956 and maybe Tyr-1072. Phosphorylated on at least 12 sites, with a preference for Ser residues. Transphosphorylated on Ser-887 by SERK1 and on Ser-838, Thr-846, Ser-858 and Ser-1166 by BAK1. Phosphorylation on Ser-1166 enhances the kinase activity. Glycosylated. As to expression, expressed ubiquitously.

It is found in the cell membrane. Its subcellular location is the endosome membrane. The catalysed reaction is L-seryl-[protein] + ATP = O-phospho-L-seryl-[protein] + ADP + H(+). It catalyses the reaction L-threonyl-[protein] + ATP = O-phospho-L-threonyl-[protein] + ADP + H(+). It carries out the reaction L-tyrosyl-[protein] + ATP = O-phospho-L-tyrosyl-[protein] + ADP + H(+). Its activity is regulated as follows. Activated by Ser and Thr phosphorylation. Receptor with a dual specificity kinase activity acting on both serine/threonine- and tyrosine-containing substrates. Regulates, in response to brassinosteroid binding, a signaling cascade involved in plant development, including expression of light- and stress-regulated genes, promotion of cell elongation, normal leaf and chloroplast senescence, and flowering. Binds brassinolide (BL), and less effectively castasterone (CS), but not 2,3,22,23-O-tetramethylbrassinolide or ecdysone. May be involved in a feedback regulation of brassinosteroid biosynthesis. Phosphorylates BRI1-associated receptor kinase 1 (BAK1), Transthyretin-Like protein (TTL) and SERK1 on 'Ser-299' and 'Thr-462' in vitro. May have a guanylyl cyclase activity. Phosphorylates BSK1, BSK2 and BSK3 in vitro. Phosphorylates BSK1, BSK3, BSK5, BSK6, BSK8 and BSK11 in vitro. This Arabidopsis thaliana (Mouse-ear cress) protein is Protein BRASSINOSTEROID INSENSITIVE 1.